A 756-amino-acid chain; its full sequence is Polyribonucleotide nucleotidyltransferase (756 aa).

Residues aspartate 492 and aspartate 498 each contribute to the Mg(2+) site. Positions 559-618 (PQHAEVFVNPDVIRIIIGPGGKNIKAITAATGASIDIEDSGKVSIFAPTYEAMEMAREMV) constitute a KH domain. One can recognise an S1 motif domain in the interval 628-702 (GKNYVGKVRK…SRKAVLLEEQ (75 aa)). A disordered region spans residues 703–756 (GVEWNPEDTARPSGPPRDRGDRGDRGGRGDRGGDRRGGDRGGRGGDRGRGGDRR). A compositionally biased stretch (basic and acidic residues) spans 718 to 756 (PRDRGDRGDRGGRGDRGGDRRGGDRGGRGGDRGRGGDRR).

This sequence belongs to the polyribonucleotide nucleotidyltransferase family. Mg(2+) is required as a cofactor.

It localises to the cytoplasm. The catalysed reaction is RNA(n+1) + phosphate = RNA(n) + a ribonucleoside 5'-diphosphate. Its function is as follows. Involved in mRNA degradation. Catalyzes the phosphorolysis of single-stranded polyribonucleotides processively in the 3'- to 5'-direction. The chain is Polyribonucleotide nucleotidyltransferase from Nitratidesulfovibrio vulgaris (strain DSM 19637 / Miyazaki F) (Desulfovibrio vulgaris).